A 524-amino-acid polypeptide reads, in one-letter code: Probable lipid II flippase MurJ (524 aa).

13 helical membrane-spanning segments follow: residues I44–L64, L103–I123, I146–T166, I172–A192, F195–V215, I250–L270, L284–L304, W322–A342, L367–F387, P396–G416, H420–W440, W456–L476, and L494–F514.

It belongs to the MurJ/MviN family.

The protein localises to the cell inner membrane. The protein operates within cell wall biogenesis; peptidoglycan biosynthesis. Its function is as follows. Involved in peptidoglycan biosynthesis. Transports lipid-linked peptidoglycan precursors from the inner to the outer leaflet of the cytoplasmic membrane. This is Probable lipid II flippase MurJ from Salmonella typhimurium (strain LT2 / SGSC1412 / ATCC 700720).